The following is a 113-amino-acid chain: Con-Ins G3b (113 aa).

A signal peptide spans 1–21 (MTTSFYFLLVALGLLLYVCQS). Residues 22–29 (SFGNQHTR) constitute a propeptide that is removed on maturation. Pro34 carries the post-translational modification 4-hydroxyproline; partial. Disulfide bonds link Cys38-Cys99, Cys50-Cys112, and Cys98-Cys103. Glu41 carries the 4-carboxyglutamate modification. His51 carries the histidine amide modification. A propeptide spans 52 to 92 (GKRNDAGKKRGRASPLWQRQGFLSMLKAKRNEAFFLQRDGR) (c peptide). Glu96 bears the 4-carboxyglutamate mark. 4-hydroxyproline; partial is present on Pro102.

This sequence belongs to the insulin family. In terms of assembly, heterodimer of A and B chains; disulfide-linked. In terms of processing, it is noteworthy that in this dimer, in contrast to Con-Ins G1, the chain B is amidated and not the chain A. Expressed by the venom gland.

It is found in the secreted. Functionally, this venom insulin, from a fish-hunting cone snail, facilitates prey capture by rapidly inducing hypoglycemic shock. It is one of the smallest known insulin found in nature and lacks the C-terminal segment of the B chain that, in human insulin, mediates engagement of the insulin receptor (INSR) and assembly of the hormone's hexameric storage form. Despite lacking this segment, it both binds and activates human insulin receptor (long isoform (HIR-B)) with only a 10-fold lower potency. In vivo, intraperitoneal injection of this peptide into zebrafish lowers blood glucose with the same potency than human insulin. In addition, when applied to water, this peptide reduces overall locomotor activity of zebrafish larvae, observed as a significant decrease in the percentage of time spent swimming and movement frequency. The protein is Con-Ins G3b of Conus geographus (Geography cone).